Consider the following 114-residue polypeptide: Ribulose bisphosphate carboxylase small subunit 2 (114 aa).

This sequence belongs to the RuBisCO small chain family. In terms of assembly, heterohexadecamer of 8 large and 8 small subunits. Forms a CsoS2-CsoS1-RuBisCO complex.

The protein resides in the carboxysome. RuBisCO catalyzes two reactions: the carboxylation of D-ribulose 1,5-bisphosphate, the primary event in carbon dioxide fixation, as well as the oxidative fragmentation of the pentose substrate. Both reactions occur simultaneously and in competition at the same active site. Although the small subunit is not catalytic it is essential for maximal activity. In terms of biological role, replacing the endogenous type I ccbLS genes in H.neapolitanus with this carboxysomally targeted enzyme reconstitutes RuBisCO with about 25% of normal activity; the active enzyme is targeted to carboxysomes. The protein is Ribulose bisphosphate carboxylase small subunit 2 of Hydrogenovibrio crunogenus (strain DSM 25203 / XCL-2) (Thiomicrospira crunogena).